We begin with the raw amino-acid sequence, 225 residues long: Probable 3-keto-L-gulonate-6-phosphate decarboxylase (225 aa).

Asp11 provides a ligand contact to substrate. 2 residues coordinate Mg(2+): Glu33 and Asp62. Arg202 provides a ligand contact to substrate.

It belongs to the HPS/KGPDC family. KGPDC subfamily. As to quaternary structure, homodimer. It depends on Mg(2+) as a cofactor.

It catalyses the reaction 3-dehydro-L-gulonate 6-phosphate + H(+) = L-xylulose 5-phosphate + CO2. Its function is as follows. Catalyzes the decarboxylation of 3-keto-L-gulonate-6-P into L-xylulose-5-P. The polypeptide is Probable 3-keto-L-gulonate-6-phosphate decarboxylase (sgbH) (Haemophilus influenzae (strain ATCC 51907 / DSM 11121 / KW20 / Rd)).